Consider the following 160-residue polypeptide: Transcription antitermination protein NusB (160 aa).

This sequence belongs to the NusB family.

Functionally, involved in transcription antitermination. Required for transcription of ribosomal RNA (rRNA) genes. Binds specifically to the boxA antiterminator sequence of the ribosomal RNA (rrn) operons. This Allorhizobium ampelinum (strain ATCC BAA-846 / DSM 112012 / S4) (Agrobacterium vitis (strain S4)) protein is Transcription antitermination protein NusB.